A 559-amino-acid chain; its full sequence is DnaJ homolog subfamily C member 11 (559 aa).

The residue at position 2 (Ala2) is an N-acetylalanine. In terms of domain architecture, J spans 14–82; that stretch reads DYYSLLNVRR…QTRAIYDIYG (69 aa). The residue at position 204 (Ser204) is a Phosphoserine. The stretch at 417–457 forms a coiled coil; sequence EKELEKQRESAATDVLQKKQEAESAVRLMQESVRRIIEAEE.

Belongs to the DNAJC11 family. Associates with the mitochondrial contact site and cristae organizing system (MICOS) complex, composed of at least MICOS10/MIC10, CHCHD3/MIC19, CHCHD6/MIC25, APOOL/MIC27, IMMT/MIC60, APOO/MIC23/MIC26 and QIL1/MIC13. This complex was also known under the names MINOS or MitOS complex. The MICOS complex associates with mitochondrial outer membrane proteins SAMM50, MTX1 and MTX2 (together described as components of the mitochondrial outer membrane sorting assembly machinery (SAM) complex) and DNAJC11, mitochondrial inner membrane protein TMEM11 and with HSPA9. The MICOS and SAM complexes together with DNAJC11 are part of a large protein complex spanning both membranes termed the mitochondrial intermembrane space bridging (MIB) complex.

It localises to the mitochondrion. The protein resides in the mitochondrion outer membrane. Required for mitochondrial inner membrane organization. Seems to function through its association with the MICOS complex and the mitochondrial outer membrane sorting assembly machinery (SAM) complex. The chain is DnaJ homolog subfamily C member 11 (DNAJC11) from Pongo abelii (Sumatran orangutan).